Here is a 211-residue protein sequence, read N- to C-terminus: UPF0502 protein PC1_1804 (211 aa).

A disordered region spans residues 168–188 (SGDASDAAPEEEGAGDNSHQL).

It belongs to the UPF0502 family.

The polypeptide is UPF0502 protein PC1_1804 (Pectobacterium carotovorum subsp. carotovorum (strain PC1)).